Here is a 133-residue protein sequence, read N- to C-terminus: Egg protein CP422 (133 aa).

Positions 1–21 are cleaved as a signal peptide; the sequence is MHECMIVFFIFAVVSIYYADA. Disulfide bonds link Cys107–Cys121, Cys114–Cys125, and Cys120–Cys130.

The protein localises to the secreted. The protein is Egg protein CP422 (CP422) of Schistosoma japonicum (Blood fluke).